The following is a 245-amino-acid chain: DNA polymerase sliding clamp (245 aa).

It belongs to the PCNA family. In terms of assembly, homotrimer. The subunits circularize to form a toroid; DNA passes through its center. Replication factor C (RFC) is required to load the toroid on the DNA.

Sliding clamp subunit that acts as a moving platform for DNA processing. Responsible for tethering the catalytic subunit of DNA polymerase and other proteins to DNA during high-speed replication. The chain is DNA polymerase sliding clamp from Archaeoglobus fulgidus (strain ATCC 49558 / DSM 4304 / JCM 9628 / NBRC 100126 / VC-16).